Reading from the N-terminus, the 215-residue chain is Guanylate kinase (215 aa).

In terms of domain architecture, Guanylate kinase-like spans 6 to 185 (GAILVLSGPS…SEKLLLSIAR (180 aa)). 13-20 (GPSGSGKS) provides a ligand contact to ATP.

Belongs to the guanylate kinase family.

The protein localises to the cytoplasm. The enzyme catalyses GMP + ATP = GDP + ADP. Functionally, essential for recycling GMP and indirectly, cGMP. The polypeptide is Guanylate kinase (Wolinella succinogenes (strain ATCC 29543 / DSM 1740 / CCUG 13145 / JCM 31913 / LMG 7466 / NCTC 11488 / FDC 602W) (Vibrio succinogenes)).